Reading from the N-terminus, the 297-residue chain is Lipoyl synthase (297 aa).

Positions 34, 39, 45, 60, 64, 67, and 273 each coordinate [4Fe-4S] cluster. The Radical SAM core domain occupies 46–262; that stretch reads WNKRHATVMI…KYVAYSKGFL (217 aa).

It belongs to the radical SAM superfamily. Lipoyl synthase family. Requires [4Fe-4S] cluster as cofactor.

It localises to the cytoplasm. It carries out the reaction [[Fe-S] cluster scaffold protein carrying a second [4Fe-4S](2+) cluster] + N(6)-octanoyl-L-lysyl-[protein] + 2 oxidized [2Fe-2S]-[ferredoxin] + 2 S-adenosyl-L-methionine + 4 H(+) = [[Fe-S] cluster scaffold protein] + N(6)-[(R)-dihydrolipoyl]-L-lysyl-[protein] + 4 Fe(3+) + 2 hydrogen sulfide + 2 5'-deoxyadenosine + 2 L-methionine + 2 reduced [2Fe-2S]-[ferredoxin]. It participates in protein modification; protein lipoylation via endogenous pathway; protein N(6)-(lipoyl)lysine from octanoyl-[acyl-carrier-protein]: step 2/2. In terms of biological role, catalyzes the radical-mediated insertion of two sulfur atoms into the C-6 and C-8 positions of the octanoyl moiety bound to the lipoyl domains of lipoate-dependent enzymes, thereby converting the octanoylated domains into lipoylated derivatives. The polypeptide is Lipoyl synthase (Ehrlichia chaffeensis (strain ATCC CRL-10679 / Arkansas)).